The chain runs to 464 residues: Asparagine--tRNA ligase (464 aa).

Belongs to the class-II aminoacyl-tRNA synthetase family. As to quaternary structure, homodimer.

The protein localises to the cytoplasm. It catalyses the reaction tRNA(Asn) + L-asparagine + ATP = L-asparaginyl-tRNA(Asn) + AMP + diphosphate + H(+). The chain is Asparagine--tRNA ligase from Azobacteroides pseudotrichonymphae genomovar. CFP2.